The sequence spans 94 residues: Cell division topological specificity factor (94 aa).

Belongs to the MinE family.

In terms of biological role, prevents the cell division inhibition by proteins MinC and MinD at internal division sites while permitting inhibition at polar sites. This ensures cell division at the proper site by restricting the formation of a division septum at the midpoint of the long axis of the cell. In Beijerinckia indica subsp. indica (strain ATCC 9039 / DSM 1715 / NCIMB 8712), this protein is Cell division topological specificity factor.